The primary structure comprises 546 residues: Chaperonin GroEL 2 (546 aa).

Residues 30–33 (TLGP), Lys51, 87–91 (DGTTT), Gly415, 479–481 (NAA), and Asp495 each bind ATP. The disordered stretch occupies residues 524–546 (APKDAPPAAPAGVPGAGGPGFDF). Residues 537–546 (PGAGGPGFDF) show a composition bias toward gly residues.

Belongs to the chaperonin (HSP60) family. As to quaternary structure, forms a cylinder of 14 subunits composed of two heptameric rings stacked back-to-back. Interacts with the co-chaperonin GroES.

The protein localises to the cytoplasm. The enzyme catalyses ATP + H2O + a folded polypeptide = ADP + phosphate + an unfolded polypeptide.. In terms of biological role, together with its co-chaperonin GroES, plays an essential role in assisting protein folding. The GroEL-GroES system forms a nano-cage that allows encapsulation of the non-native substrate proteins and provides a physical environment optimized to promote and accelerate protein folding. This chain is Chaperonin GroEL 2, found in Burkholderia pseudomallei (strain 1710b).